The following is a 148-amino-acid chain: MAYKHILIAVDLSPESKVLVEKAVSMAKPYNAKVSLIHVDVNYSDLYTGLIDVNLGDMQKRISEETHNALTELSQNAGYPVEQTLSGSGDLGQVLVDAIKKYDIDLVLCGHHQDFWSKLMSSARQLINTVHVDMLIVPLRDDENGEDD.

The protein belongs to the universal stress protein A family. As to quaternary structure, homodimer.

It localises to the cytoplasm. Required for resistance to DNA-damaging agents. The chain is Universal stress protein A (uspA) from Yersinia pestis.